Reading from the N-terminus, the 307-residue chain is Elongation factor Ts (307 aa).

The interval T80–V83 is involved in Mg(2+) ion dislocation from EF-Tu.

Belongs to the EF-Ts family.

It localises to the cytoplasm. Associates with the EF-Tu.GDP complex and induces the exchange of GDP to GTP. It remains bound to the aminoacyl-tRNA.EF-Tu.GTP complex up to the GTP hydrolysis stage on the ribosome. The chain is Elongation factor Ts from Azorhizobium caulinodans (strain ATCC 43989 / DSM 5975 / JCM 20966 / LMG 6465 / NBRC 14845 / NCIMB 13405 / ORS 571).